The primary structure comprises 453 residues: Trigger factor (453 aa).

Residues 171 to 256 (GDRITISFKG…VSLIEAPEEL (86 aa)) form the PPIase FKBP-type domain.

This sequence belongs to the FKBP-type PPIase family. Tig subfamily.

It localises to the cytoplasm. It catalyses the reaction [protein]-peptidylproline (omega=180) = [protein]-peptidylproline (omega=0). Functionally, involved in protein export. Acts as a chaperone by maintaining the newly synthesized protein in an open conformation. Functions as a peptidyl-prolyl cis-trans isomerase. This is Trigger factor from Nitrobacter winogradskyi (strain ATCC 25391 / DSM 10237 / CIP 104748 / NCIMB 11846 / Nb-255).